The sequence spans 432 residues: Lecithin-cholesterol acyltransferase-like 1 (432 aa).

A helical membrane pass occupies residues 7–29 (HYSVVIAILVVVTMTSMCQAVGS). Catalysis depends on Ser-209, which acts as the Acyl-ester intermediate. Active-site charge relay system residues include Asp-374 and His-400.

The protein belongs to the AB hydrolase superfamily. Lipase family.

The protein localises to the membrane. This chain is Lecithin-cholesterol acyltransferase-like 1 (LCAT1), found in Arabidopsis thaliana (Mouse-ear cress).